Reading from the N-terminus, the 328-residue chain is scyllo-inositol 2-dehydrogenase (NADP(+)) IolU (328 aa).

It belongs to the Gfo/Idh/MocA family.

It catalyses the reaction scyllo-inositol + NADP(+) = scyllo-inosose + NADPH + H(+). Functionally, catalyzes the NADPH-dependent reduction of scyllo-inosose (SIS) to scyllo-inositol (SI) in vitro, but is unable to dehydrogenate scyllo-inositol and myo-inositol. Is less efficient than the functional paralog IolW. Under physiological conditions, may primarily function as an NADPH-dependent oxidoreductase that reduces carbonyl group(s) in its substrates. Cannot use NADH instead of NADPH. The chain is scyllo-inositol 2-dehydrogenase (NADP(+)) IolU from Bacillus subtilis (strain 168).